Reading from the N-terminus, the 157-residue chain is NAD(P)H-quinone oxidoreductase subunit N (157 aa).

It belongs to the complex I NdhN subunit family. In terms of assembly, NDH-1 can be composed of about 15 different subunits; different subcomplexes with different compositions have been identified which probably have different functions.

It localises to the cellular thylakoid membrane. The enzyme catalyses a plastoquinone + NADH + (n+1) H(+)(in) = a plastoquinol + NAD(+) + n H(+)(out). The catalysed reaction is a plastoquinone + NADPH + (n+1) H(+)(in) = a plastoquinol + NADP(+) + n H(+)(out). In terms of biological role, NDH-1 shuttles electrons from an unknown electron donor, via FMN and iron-sulfur (Fe-S) centers, to quinones in the respiratory and/or the photosynthetic chain. The immediate electron acceptor for the enzyme in this species is believed to be plastoquinone. Couples the redox reaction to proton translocation, and thus conserves the redox energy in a proton gradient. Cyanobacterial NDH-1 also plays a role in inorganic carbon-concentration. The protein is NAD(P)H-quinone oxidoreductase subunit N of Picosynechococcus sp. (strain ATCC 27264 / PCC 7002 / PR-6) (Agmenellum quadruplicatum).